Reading from the N-terminus, the 1603-residue chain is Gag-Pol polyprotein (1603 aa).

Positions 128-141 are enriched in basic and acidic residues; it reads VGETTVQRDAKMAP. Positions 128–150 are disordered; sequence VGETTVQRDAKMAPEETATPKTV. The PPXY motif signature appears at 172–175; it reads PPPY. Residues 180–184 carry the LYPX(n)L motif motif; sequence LYPSL. The disordered stretch occupies residues 181–217; it reads YPSLAGVGEQQGQGGDTPPGAEQSRAEPGHAGQAPGP. Involved in capsid protein dimerization regions lie at residues 217–259, 290–298, and 351–362; these read PALT…KLIT, HDVTNLMRV, and GMVGNPQGQAAL. The short motif at 219–229 is the Nuclear export signal element; it reads LTDWARVREEL. 2 consecutive CCHC-type zinc fingers follow at residues 507-524 and 533-550; these read GLCYTCGSPGHYQAQCPK and ERCQLCNGMGHNAKQCRK. The Nuclear/nucleolar localization signal signature appears at 524–527; it reads KKRK. The interval 543–575 is disordered; sequence HNAKQCRKRDGNQGQRPGKGLSSGPWPGPEPPA. One can recognise a Peptidase A2 domain in the interval 609 to 690; sequence ITALLDSGAD…VRGSILGRDC (82 aa). The For protease activity; shared with dimeric partner role is filled by D614. The Reverse transcriptase domain occupies 750–938; sequence LQLGHIEPSL…PGVQYLGYKL (189 aa). Positions 815, 890, 891, 1158, 1192, 1213, and 1272 each coordinate Mg(2+). The region spanning 1149 to 1280 is the RNase H type-1 domain; that stretch reads PVPGPTVFTD…ADSQATFQAY (132 aa). The Integrase-type zinc finger occupies 1280-1321; it reads YPLREAKDLHTALHIGPRALSKACNISMQQAREVVQTCPHCN. Residues H1289, H1293, C1317, and C1320 each contribute to the Zn(2+) site. The region spanning 1333–1496 is the Integrase catalytic domain; that stretch reads RGLGPLQIWQ…TPIQKHWRPT (164 aa). Mg(2+) contacts are provided by D1344, D1401, and E1437. A DNA-binding region (integrase-type) is located at residues 1502 to 1550; it reads PPVKIRIETGEWEKGWNVLVWGRGYAAVKNRDTDKVIWVPSRKVKPDIT. Residues 1548–1567 form an involved in homooctamerization region; sequence DITQKDEVTKKDEASPLFAG. Residues 1569 to 1603 form a disordered region; that stretch reads SDWIPWEDEQEGLQGETASNKQERPGEDTLAANES.

As to quaternary structure, active as a homodimer. Homodimer. Homomultimer. Homohexamer. In terms of assembly, homodimer; further associates as a homooctamer. As to quaternary structure, heterodimer of alpha and beta subunits. Three forms of RT exist: alpha-alpha (alpha-Pol), beta-beta (beta-Pol), and alpha-beta, with the major form being the heterodimer. Both the polymerase and RNase H active sites are located in the alpha subunit of heterodimeric RT alpha-beta. Mg(2+) serves as cofactor. It depends on Mn(2+) as a cofactor. In terms of processing, specific enzymatic cleavages in vivo yield mature proteins. Capsid protein p27: The cleavage at the C-terminus is slowly trimmed by the viral protease, sometimes being cut internally thereby generating the short version of the capsid protein and a capsid protein C-terminally extended by 3 amino acids in a ratio of 2:1.

It is found in the virion. It catalyses the reaction DNA(n) + a 2'-deoxyribonucleoside 5'-triphosphate = DNA(n+1) + diphosphate. It carries out the reaction Endonucleolytic cleavage to 5'-phosphomonoester.. In terms of biological role, capsid protein p27: Self-associates to form the irregular polyhedron core composed of hexamers and pentamers, that encapsulates the genomic RNA-nucleocapsid complex. Assembles as a tube in vitro. Binds to inositol hexakisphosphate (IP6), which allows the assembly of the polyhedral capsid. Functionally, plays a role in the oligomerization of the Gag polyprotein and in the stabilization of the immature particle. Essential layering element during tube assembly. Allows the cooperative binging of Gag to the host plasma membrane. Its function is as follows. Binds strongly to viral nucleic acids and promotes their packaging. Plays a role in the maturation-stabilization of the viral dimeric RNA via highly structured zinc-binding motifs. The aspartyl protease mediates proteolytic cleavages of Gag and Gag-Pol polyproteins during or shortly after the release of the virion from the plasma membrane. Cleavages take place as an ordered, step-wise cascade to yield mature proteins. This process is called maturation. Displays maximal activity during the budding process just prior to particle release from the cell. In terms of biological role, catalyzes viral DNA integration into the host chromosome, by performing a series of DNA cutting and joining reactions. This recombination event is an essential step in the viral replication cycle. Has a strong preference for using the 3'-OH at the viral DNA end as a nucleophile. The chain is Gag-Pol polyprotein (gag-pol) from Gallus gallus (Chicken).